The sequence spans 164 residues: NADH-quinone oxidoreductase subunit I (164 aa).

4Fe-4S ferredoxin-type domains lie at 55–85 (LRRYPNGEERCIACKLCEAICPAQAITIDAE) and 95–124 (TRYDIDMTKCIYCGFCQEACPVDAIVEGPN). [4Fe-4S] cluster is bound by residues C65, C68, C71, C75, C104, C107, C110, and C114.

This sequence belongs to the complex I 23 kDa subunit family. NDH-1 is composed of 14 different subunits. Subunits NuoA, H, J, K, L, M, N constitute the membrane sector of the complex. Requires [4Fe-4S] cluster as cofactor.

It is found in the cell inner membrane. The catalysed reaction is a quinone + NADH + 5 H(+)(in) = a quinol + NAD(+) + 4 H(+)(out). In terms of biological role, NDH-1 shuttles electrons from NADH, via FMN and iron-sulfur (Fe-S) centers, to quinones in the respiratory chain. The immediate electron acceptor for the enzyme in this species is believed to be ubiquinone. Couples the redox reaction to proton translocation (for every two electrons transferred, four hydrogen ions are translocated across the cytoplasmic membrane), and thus conserves the redox energy in a proton gradient. This is NADH-quinone oxidoreductase subunit I from Ruegeria pomeroyi (strain ATCC 700808 / DSM 15171 / DSS-3) (Silicibacter pomeroyi).